The sequence spans 123 residues: DNA-directed RNA polymerase I subunit RPA12 (123 aa).

The Zn(2+) site is built by C17, C20, C35, C38, C84, and C87. A C4-type zinc finger spans residues C17–C38. The TFIIS-type zinc finger occupies V80–K120. Residues D103–E104 carry the Hairpin motif. Zn(2+) is bound by residues C112 and C115.

Belongs to the archaeal RpoM/eukaryotic RPA12/RPB9/RPC11 RNA polymerase family. In terms of assembly, component of the RNA polymerase I (Pol I) complex consisting of at least 13 subunits.

The protein resides in the nucleus. The protein localises to the nucleolus. Its function is as follows. Core component of RNA polymerase I (Pol I), a DNA-dependent RNA polymerase which synthesizes ribosomal RNA precursors using the four ribonucleoside triphosphates as substrates. Can mediate Pol I proofreading of the nascent RNA transcript. Anchors into the Pol I active site to monitor transcription fidelity and cleave mis-incorporated 5'-ribonucleotides. This is DNA-directed RNA polymerase I subunit RPA12 from Bos taurus (Bovine).